A 221-amino-acid polypeptide reads, in one-letter code: Putative N-acetylmannosamine-6-phosphate 2-epimerase (221 aa).

The protein belongs to the NanE family.

The enzyme catalyses an N-acyl-D-glucosamine 6-phosphate = an N-acyl-D-mannosamine 6-phosphate. It participates in amino-sugar metabolism; N-acetylneuraminate degradation; D-fructose 6-phosphate from N-acetylneuraminate: step 3/5. Its function is as follows. Converts N-acetylmannosamine-6-phosphate (ManNAc-6-P) to N-acetylglucosamine-6-phosphate (GlcNAc-6-P). This is Putative N-acetylmannosamine-6-phosphate 2-epimerase from Clostridium perfringens (strain SM101 / Type A).